The primary structure comprises 427 residues: 3-phosphoshikimate 1-carboxyvinyltransferase (427 aa).

3-phosphoshikimate contacts are provided by K27, S28, and R32. Position 27 (K27) interacts with phosphoenolpyruvate. Phosphoenolpyruvate-binding residues include G95 and R123. 3-phosphoshikimate contacts are provided by S166, S167, Q168, S192, D305, and K332. Q168 contacts phosphoenolpyruvate. Catalysis depends on D305, which acts as the Proton acceptor. Positions 336 and 377 each coordinate phosphoenolpyruvate.

It belongs to the EPSP synthase family. In terms of assembly, monomer.

Its subcellular location is the cytoplasm. The enzyme catalyses 3-phosphoshikimate + phosphoenolpyruvate = 5-O-(1-carboxyvinyl)-3-phosphoshikimate + phosphate. It functions in the pathway metabolic intermediate biosynthesis; chorismate biosynthesis. Its function is as follows. Catalyzes the transfer of the enolpyruvyl moiety of phosphoenolpyruvate (PEP) to the 5-hydroxyl of shikimate-3-phosphate (S3P) to produce enolpyruvyl shikimate-3-phosphate and inorganic phosphate. The protein is 3-phosphoshikimate 1-carboxyvinyltransferase of Aeropyrum pernix (strain ATCC 700893 / DSM 11879 / JCM 9820 / NBRC 100138 / K1).